The sequence spans 89 residues: NADH-ubiquinone oxidoreductase chain 4L (89 aa).

3 consecutive transmembrane segments (helical) span residues 1–21 (MNLSLILFLIGILGFVLNRKN), 22–42 (IILMLISIEIILLSVTFLILI), and 55–75 (FAIYIITIAGAESAIGLGILV).

This sequence belongs to the complex I subunit 4L family.

Its subcellular location is the mitochondrion membrane. The enzyme catalyses a ubiquinone + NADH + 5 H(+)(in) = a ubiquinol + NAD(+) + 4 H(+)(out). Core subunit of the mitochondrial membrane respiratory chain NADH dehydrogenase (Complex I) that is believed to belong to the minimal assembly required for catalysis. Complex I functions in the transfer of electrons from NADH to the respiratory chain. The immediate electron acceptor for the enzyme is believed to be ubiquinone. The protein is NADH-ubiquinone oxidoreductase chain 4L (ND4L) of Trichophyton rubrum (Athlete's foot fungus).